A 346-amino-acid chain; its full sequence is Lipase chaperone (346 aa).

The helical transmembrane segment at 10–30 (TIVFGVITSVLLLLLLIYYVF) threads the bilayer.

The protein belongs to the lipase chaperone family.

The protein resides in the cell inner membrane. In terms of biological role, may be involved in the folding of the extracellular lipase during its passage through the periplasm. The sequence is that of Lipase chaperone (lifO) from Acinetobacter venetianus (strain ATCC 31012 / DSM 23050 / BCRC 14357 / CCUG 45561 / CIP 110063 / KCTC 2702 / LMG 19082 / RAG-1).